We begin with the raw amino-acid sequence, 302 residues long: Vacuolar protein sorting-associated protein 26A (302 aa).

Belongs to the VPS26 family. In terms of assembly, component of the retromer complex which consists of VPS29 (MAG1), VPS26 (VPS26A or VPS26B), VPS35 (VPS35A or VPS35B or VPS35C), VPS5/17 (SNX1 or SNX2A or SNX2B). Component of a retromer subcomplex consisting of VPS29 (MAG1), VPS26 (VPS26A or VPS26B), VPS35 (VPS35A or VPS35B or VPS35C).

The protein resides in the cytoplasm. The protein localises to the endosome membrane. It is found in the prevacuolar compartment membrane. Its subcellular location is the golgi apparatus. It localises to the trans-Golgi network membrane. Functionally, plays a role in vesicular protein sorting. Component of the membrane-associated retromer complex which is essential in endosome-to-Golgi retrograde transport. The VPS29-VPS26-VPS35 subcomplex may be involved in recycling of specific cargos from endosome to the plasma membrane. The polypeptide is Vacuolar protein sorting-associated protein 26A (VPS26A) (Arabidopsis thaliana (Mouse-ear cress)).